Consider the following 110-residue polypeptide: T cell receptor alpha variable 22 (110 aa).

A signal peptide spans 1–21; that stretch reads MKRILGALLGLLSAQVCCVRG. In terms of domain architecture, Ig-like spans 22–110; it reads IQVEQSPPDL…DSGVYFCAVE (89 aa). Residues Asn38 and Asn44 are each glycosylated (N-linked (GlcNAc...) asparagine). Residues Cys43 and Cys107 are joined by a disulfide bond.

As to quaternary structure, alpha-beta TR is a heterodimer composed of an alpha and beta chain; disulfide-linked. The alpha-beta TR is associated with the transmembrane signaling CD3 coreceptor proteins to form the TR-CD3 (TcR or TCR). The assembly of alpha-beta TR heterodimers with CD3 occurs in the endoplasmic reticulum where a single alpha-beta TR heterodimer associates with one CD3D-CD3E heterodimer, one CD3G-CD3E heterodimer and one CD247 homodimer forming a stable octameric structure. CD3D-CD3E and CD3G-CD3E heterodimers preferentially associate with TR alpha and TR beta chains, respectively. The association of the CD247 homodimer is the last step of TcR assembly in the endoplasmic reticulum and is required for transport to the cell surface.

Its subcellular location is the cell membrane. Functionally, v region of the variable domain of T cell receptor (TR) alpha chain that participates in the antigen recognition. Alpha-beta T cell receptors are antigen specific receptors which are essential to the immune response and are present on the cell surface of T lymphocytes. Recognize peptide-major histocompatibility (MH) (pMH) complexes that are displayed by antigen presenting cells (APC), a prerequisite for efficient T cell adaptive immunity against pathogens. Binding of alpha-beta TR to pMH complex initiates TR-CD3 clustering on the cell surface and intracellular activation of LCK that phosphorylates the ITAM motifs of CD3G, CD3D, CD3E and CD247 enabling the recruitment of ZAP70. In turn ZAP70 phosphorylates LAT, which recruits numerous signaling molecules to form the LAT signalosome. The LAT signalosome propagates signal branching to three major signaling pathways, the calcium, the mitogen-activated protein kinase (MAPK) kinase and the nuclear factor NF-kappa-B (NF-kB) pathways, leading to the mobilization of transcription factors that are critical for gene expression and essential for T cell growth and differentiation. The T cell repertoire is generated in the thymus, by V-(D)-J rearrangement. This repertoire is then shaped by intrathymic selection events to generate a peripheral T cell pool of self-MH restricted, non-autoaggressive T cells. Post-thymic interaction of alpha-beta TR with the pMH complexes shapes TR structural and functional avidity. The chain is T cell receptor alpha variable 22 from Homo sapiens (Human).